A 177-amino-acid chain; its full sequence is Adenine phosphoribosyltransferase (177 aa).

The protein belongs to the purine/pyrimidine phosphoribosyltransferase family. In terms of assembly, homodimer.

The protein resides in the cytoplasm. It carries out the reaction AMP + diphosphate = 5-phospho-alpha-D-ribose 1-diphosphate + adenine. It participates in purine metabolism; AMP biosynthesis via salvage pathway; AMP from adenine: step 1/1. Functionally, catalyzes a salvage reaction resulting in the formation of AMP, that is energically less costly than de novo synthesis. The protein is Adenine phosphoribosyltransferase of Leptospira borgpetersenii serovar Hardjo-bovis (strain JB197).